Consider the following 130-residue polypeptide: Small ribosomal subunit protein uS9 (130 aa).

The protein belongs to the universal ribosomal protein uS9 family.

This chain is Small ribosomal subunit protein uS9, found in Tolumonas auensis (strain DSM 9187 / NBRC 110442 / TA 4).